We begin with the raw amino-acid sequence, 121 residues long: MTRTVEKTNPRLTNLILLLKNTSRENEAKIWREIAGRLETPNRNYAEVNLSKINRYAQKGETIIVPGKVLGSGVLDQSVRIAALNFSESATSKIRDAKGQCMTIEQLLKDNPKGSGVRILR.

Belongs to the eukaryotic ribosomal protein eL18 family.

The polypeptide is Large ribosomal subunit protein eL18 (Methanoregula boonei (strain DSM 21154 / JCM 14090 / 6A8)).